The primary structure comprises 486 residues: MPSRRRGPSRQQLSRSALPSIQTLVGGGCGNGTGLRNRNGNAIGLPVPPTTALITPGPVRHCQIPDLPVDGSLFFEFLFFIYLLIVLFIQYINIYKTVWWYPYNHPASCTSLNFHLIDYYLAAFITVMLARRLVWALISEATKAGAASTVHYTALILARLVLLTLCGWVLCWTLVNLFRSHSVLNLLFLGYPFGVYVPLYCFHQDSRAHLLLTDYVVQHQAVEEAASNVGSLARSKDFLSLLLESLKEQFNNATPIPTHSCPLSPDLIRNEVECLKADFNHRIKEVLFNSLFSAYYVAFLPLCFVKSTQYYDMRWSCEHLIMVWINAFVMLTTQLLPSKYCDLLHKSAAHLGKWQKLEHGFYSNAPQHIWSENTIWPQGVLVRHSRCLYRAMGPYNVAVPSDVSHARFYFLFHRPLRVLNLLILIEGSVVFYQLYSLLRSEKWNHTLSMALILFCNYYVLFKLLRDRIVLGRAYSYPLNSYELKAN.

Residue Asn31 is glycosylated (N-linked (GlcNAc...) asparagine). Transmembrane regions (helical) follow at residues 72-92 (SLFFEFLFFIYLLIVLFIQYI), 110-130 (TSLNFHLIDYYLAAFITVMLA), 155-175 (LILARLVLLTLCGWVLCWTLV), 182-202 (SVLNLLFLGYPFGVYVPLYCF), 285-305 (EVLFNSLFSAYYVAFLPLCFV), 317-337 (CEHLIMVWINAFVMLTTQLLP), 418-438 (VLNLLILIEGSVVFYQLYSLL), and 444-464 (NHTLSMALILFCNYYVLFKLL).

It belongs to the TMEM39 family. In terms of assembly, interacts with SACM1L, SEC23A and SEC24A.

It is found in the endoplasmic reticulum membrane. Regulates autophagy by controlling the spatial distribution and levels of the intracellular phosphatidylinositol 4-phosphate (PtdIns(4)P) pools. Modulates (PtdIns(4)P) levels by regulating the ER-to-Golgi trafficking of the phosphatidylinositide phosphatase SACM1L. This chain is Transmembrane protein 39A (Tmem39a), found in Mus musculus (Mouse).